The chain runs to 258 residues: 6-carboxyhexanoate--CoA ligase (258 aa).

Belongs to the BioW family. Homodimer. Mg(2+) is required as a cofactor.

The enzyme catalyses heptanedioate + ATP + CoA = 6-carboxyhexanoyl-CoA + AMP + diphosphate. Its pathway is metabolic intermediate metabolism; pimeloyl-CoA biosynthesis; pimeloyl-CoA from pimelate: step 1/1. Catalyzes the transformation of pimelate into pimeloyl-CoA with concomitant hydrolysis of ATP to AMP. The sequence is that of 6-carboxyhexanoate--CoA ligase from Bacillus atrophaeus (strain 1942).